The chain runs to 208 residues: Probable splicing factor, arginine/serine-rich 5 (208 aa).

The RRM domain maps to 2 to 74 (PRLYLGKIPY…MRLVVEMARG (73 aa)). Positions 71 to 208 (MARGKPRGND…RSPSPGSPKD (138 aa)) are disordered. Basic residues predominate over residues 84-123 (SRSPRRRSRSPRRRSRTPPRRRSRSRDRKRSRRSRSRSSS). Over residues 128–153 (PVRESRRRSESRSPSPKRDLKREASR) the composition is skewed to basic and acidic residues.

The protein belongs to the splicing factor SR family. Post-translationally, extensively phosphorylated on serine residues in the RS domain.

Its subcellular location is the nucleus. Plays a functionally redundant role in shifting germ cell sexual differentiation in hermaphrodites. This is Probable splicing factor, arginine/serine-rich 5 (rsp-5) from Caenorhabditis elegans.